Reading from the N-terminus, the 251-residue chain is Ditrans,polycis-undecaprenyl-diphosphate synthase ((2E,6E)-farnesyl-diphosphate specific) (251 aa).

The active site involves D20. Residue D20 coordinates Mg(2+). Substrate is bound by residues 21–24 (GNGR), W25, R33, H37, and 65–67 (SSE). Residue N68 is the Proton acceptor of the active site. Substrate-binding positions include W69, R71, R188, and 194 to 196 (RIS). A Mg(2+)-binding site is contributed by E207.

It belongs to the UPP synthase family. As to quaternary structure, homodimer. Mg(2+) serves as cofactor.

It catalyses the reaction 8 isopentenyl diphosphate + (2E,6E)-farnesyl diphosphate = di-trans,octa-cis-undecaprenyl diphosphate + 8 diphosphate. Its function is as follows. Catalyzes the sequential condensation of isopentenyl diphosphate (IPP) with (2E,6E)-farnesyl diphosphate (E,E-FPP) to yield (2Z,6Z,10Z,14Z,18Z,22Z,26Z,30Z,34E,38E)-undecaprenyl diphosphate (di-trans,octa-cis-UPP). UPP is the precursor of glycosyl carrier lipid in the biosynthesis of bacterial cell wall polysaccharide components such as peptidoglycan and lipopolysaccharide. The sequence is that of Ditrans,polycis-undecaprenyl-diphosphate synthase ((2E,6E)-farnesyl-diphosphate specific) from Vibrio parahaemolyticus serotype O3:K6 (strain RIMD 2210633).